The following is a 197-amino-acid chain: Nucleoside triphosphate pyrophosphatase (197 aa).

Residue Asp72 is the Proton acceptor of the active site.

It belongs to the Maf family. The cofactor is a divalent metal cation.

The protein resides in the cytoplasm. The enzyme catalyses a ribonucleoside 5'-triphosphate + H2O = a ribonucleoside 5'-phosphate + diphosphate + H(+). It carries out the reaction a 2'-deoxyribonucleoside 5'-triphosphate + H2O = a 2'-deoxyribonucleoside 5'-phosphate + diphosphate + H(+). Functionally, nucleoside triphosphate pyrophosphatase. May have a dual role in cell division arrest and in preventing the incorporation of modified nucleotides into cellular nucleic acids. The sequence is that of Nucleoside triphosphate pyrophosphatase from Corynebacterium efficiens (strain DSM 44549 / YS-314 / AJ 12310 / JCM 11189 / NBRC 100395).